The primary structure comprises 101 residues: Small ribosomal subunit protein uS14 (101 aa).

A disordered region spans residues 53-72 (RDAAAVRVRNRDSHDGRPRG). The segment covering 61-70 (RNRDSHDGRP) has biased composition (basic and acidic residues).

It belongs to the universal ribosomal protein uS14 family. Part of the 30S ribosomal subunit. Contacts proteins S3 and S10.

Its function is as follows. Binds 16S rRNA, required for the assembly of 30S particles and may also be responsible for determining the conformation of the 16S rRNA at the A site. This is Small ribosomal subunit protein uS14 from Corynebacterium glutamicum (strain ATCC 13032 / DSM 20300 / JCM 1318 / BCRC 11384 / CCUG 27702 / LMG 3730 / NBRC 12168 / NCIMB 10025 / NRRL B-2784 / 534).